Reading from the N-terminus, the 229-residue chain is Small ribosomal subunit protein uS3 (229 aa).

The KH type-2 domain occupies 39 to 107 (IRKFLKKELY…EVFINIKEEK (69 aa)).

This sequence belongs to the universal ribosomal protein uS3 family. As to quaternary structure, part of the 30S ribosomal subunit. Forms a tight complex with proteins S10 and S14.

In terms of biological role, binds the lower part of the 30S subunit head. Binds mRNA in the 70S ribosome, positioning it for translation. The polypeptide is Small ribosomal subunit protein uS3 (Nitratiruptor sp. (strain SB155-2)).